The chain runs to 445 residues: Probable D-serine dehydratase (445 aa).

Position 111 is an N6-(pyridoxal phosphate)lysine (Lys111).

This sequence belongs to the serine/threonine dehydratase family. DsdA subfamily. It depends on pyridoxal 5'-phosphate as a cofactor.

It catalyses the reaction D-serine = pyruvate + NH4(+). The sequence is that of Probable D-serine dehydratase from Burkholderia pseudomallei (strain 1106a).